A 98-amino-acid polypeptide reads, in one-letter code: Integration host factor subunit alpha (98 aa).

Basic and acidic residues predominate over residues Asp-53–Glu-69. Residues Asp-53–Pro-72 form a disordered region.

The protein belongs to the bacterial histone-like protein family. As to quaternary structure, heterodimer of an alpha and a beta chain.

In terms of biological role, this protein is one of the two subunits of integration host factor, a specific DNA-binding protein that functions in genetic recombination as well as in transcriptional and translational control. This is Integration host factor subunit alpha from Vibrio atlanticus (strain LGP32) (Vibrio splendidus (strain Mel32)).